Consider the following 1101-residue polypeptide: Rho guanine nucleotide exchange factor gef2 (1101 aa).

A disordered region spans residues 203-222; that stretch reads EDSRKKTSSPSPSFASSKDA. Residues 210-219 are compositionally biased toward low complexity; sequence SSPSPSFASS. The DH domain occupies 230–428; it reads KKKSLLIEMM…KNIAEMPTVD (199 aa). Residues Ser736 and Ser977 each carry the phosphoserine modification.

It is found in the cytoplasm. Its subcellular location is the cytoskeleton. It localises to the microtubule organizing center. The protein localises to the spindle pole body. Has a role in the control of cell polarity and cytokinesis. Involved in bipolar growth and septum formation. The sequence is that of Rho guanine nucleotide exchange factor gef2 (gef2) from Schizosaccharomyces pombe (strain 972 / ATCC 24843) (Fission yeast).